A 271-amino-acid chain; its full sequence is Transmembrane protein 150A (271 aa).

Over Met-1 to Thr-2 the chain is Cytoplasmic. The chain crosses the membrane as a helical span at residues Ala-3–Tyr-23. The Extracellular segment spans residues Ala-24–Glu-75. N-linked (GlcNAc...) asparagine glycosylation is found at Asn-37 and Asn-41. Residues Ser-76 to Leu-96 traverse the membrane as a helical segment. At Arg-97–Ser-108 the chain is on the cytoplasmic side. Residues Trp-109–Gly-129 form a helical membrane-spanning segment. The Extracellular segment spans residues Asn-130–His-140. The helical transmembrane segment at Tyr-141 to Leu-161 threads the bilayer. Residues Phe-162–Arg-178 lie on the Cytoplasmic side of the membrane. A helical transmembrane segment spans residues Ser-179–Glu-199. At Ser-200–Glu-211 the chain is on the extracellular side. The chain crosses the membrane as a helical span at residues Trp-212–Ile-232. Residues Ser-233–Ile-271 are Cytoplasmic-facing.

Belongs to the DRAM/TMEM150 family. As to quaternary structure, interacts (via C-terminal cytoplasmic tail) with PI4KA.

It localises to the cell membrane. Regulates localization of phosphatidylinositol 4-kinase (PI4K) to the plasma membrane, possibly by reducing the association of TTC7 (TTC7A or TTC7B) with the PI4K complex. Acts as a regulator of phosphatidylinositol 4-phosphate (PtdIns(4)P) synthesis. May also play a role in fasting-induced catabolism. The chain is Transmembrane protein 150A (Tmem150a) from Mus musculus (Mouse).